An 847-amino-acid polypeptide reads, in one-letter code: Putative disease resistance RPP13-like protein 2 (847 aa).

Residues 26–42 adopt a coiled-coil conformation; it reads GVKDDLEELKTELTCIQ. The 305-residue stretch at 142–446 folds into the NB-ARC domain; that stretch reads STSRVREVRR…AEGFIQEDEE (305 aa). Position 191-198 (191-198) interacts with ATP; it reads GMEGLGKT. LRR repeat units lie at residues 587 to 610, 612 to 634, 703 to 726, 749 to 774, and 807 to 830; these read LVHL…ISNL, FLQT…NLTS, LKNL…TVRF, FPSL…KLQR, and IKRL…NLDN.

The protein belongs to the disease resistance NB-LRR family. RPP13 subfamily.

Potential disease resistance protein. In Arabidopsis thaliana (Mouse-ear cress), this protein is Putative disease resistance RPP13-like protein 2 (RPP13L2).